We begin with the raw amino-acid sequence, 104 residues long: UPF0045 protein YqgV (104 aa).

It belongs to the UPF0045 family.

The protein is UPF0045 protein YqgV (yqgV) of Bacillus subtilis (strain 168).